We begin with the raw amino-acid sequence, 317 residues long: Probable RuBisCO transcriptional regulator (317 aa).

An HTH lysR-type domain is found at 6–63; it reads FTLDQLRILRAILIQGSFKKAATSLYISQPAVSSHVHNIEKQLNIQLFDRSHRNAQLT. Positions 23–42 form a DNA-binding region, H-T-H motif; sequence FKKAATSLYISQPAVSSHVH.

This sequence belongs to the LysR transcriptional regulatory family.

Its subcellular location is the plastid. The protein resides in the chloroplast. Trans-acting transcriptional regulator of RuBisCO genes (rbcL and rbcS) expression. The polypeptide is Probable RuBisCO transcriptional regulator (rbcR) (Cyanidium caldarium (Red alga)).